The sequence spans 192 residues: Ribose 1,5-bisphosphate phosphokinase PhnN (192 aa).

It belongs to the ribose 1,5-bisphosphokinase family.

The catalysed reaction is alpha-D-ribose 1,5-bisphosphate + ATP = 5-phospho-alpha-D-ribose 1-diphosphate + ADP. It functions in the pathway metabolic intermediate biosynthesis; 5-phospho-alpha-D-ribose 1-diphosphate biosynthesis; 5-phospho-alpha-D-ribose 1-diphosphate from D-ribose 5-phosphate (route II): step 3/3. In terms of biological role, catalyzes the phosphorylation of ribose 1,5-bisphosphate to 5-phospho-D-ribosyl alpha-1-diphosphate (PRPP). The sequence is that of Ribose 1,5-bisphosphate phosphokinase PhnN from Achromobacter xylosoxidans (strain A8).